The chain runs to 195 residues: PRELI domain containing protein 3B (195 aa).

Residues 1-172 (MKIWTSEHVF…VIHKLNAEIE (172 aa)) enclose the PRELI/MSF1 domain. S46 and S51 each carry phosphoserine.

Belongs to the slowmo family.

The sequence is that of PRELI domain containing protein 3B (Prelid3b) from Mus musculus (Mouse).